The primary structure comprises 1385 residues: Probable serine/threonine-protein kinase DDB_G0268876 (1385 aa).

The Protein kinase domain occupies 758-1008 (LELTKEIGRG…QQIITYLENL (251 aa)). Residues 764–772 (IGRGVSGVV) and Lys785 contribute to the ATP site. Asp878 acts as the Proton acceptor in catalysis. 3 disordered regions span residues 1040–1074 (GGNSDEHESNIDIDTVSGSNNNESSTAVSLNENKI), 1091–1266 (EVSK…SVGG), and 1287–1339 (ISSS…NNNN). Over residues 1055 to 1073 (VSGSNNNESSTAVSLNENK) the composition is skewed to polar residues. A compositionally biased stretch (low complexity) spans 1107 to 1144 (SSSTSSSPSTLSAPQSPVGSTSPMGSTSTSPISNNNNR). The span at 1145–1162 (PTHDHQQPHQVKWERIVP) shows a compositional bias: basic and acidic residues. Composition is skewed to low complexity over residues 1189 to 1232 (NNNN…SSGI), 1242 to 1266 (FLSSGSSLSEQHRSVSNSVSNSVGG), and 1295 to 1339 (NNNN…NNNN).

The protein belongs to the protein kinase superfamily. TKL Ser/Thr protein kinase family.

The catalysed reaction is L-seryl-[protein] + ATP = O-phospho-L-seryl-[protein] + ADP + H(+). It carries out the reaction L-threonyl-[protein] + ATP = O-phospho-L-threonyl-[protein] + ADP + H(+). In Dictyostelium discoideum (Social amoeba), this protein is Probable serine/threonine-protein kinase DDB_G0268876.